Reading from the N-terminus, the 160-residue chain is Cyclic pyranopterin monophosphate synthase (160 aa).

Substrate is bound by residues 77 to 79 (MCH) and 114 to 115 (ME). D129 is an active-site residue.

The protein belongs to the MoaC family. In terms of assembly, homohexamer; trimer of dimers.

The catalysed reaction is (8S)-3',8-cyclo-7,8-dihydroguanosine 5'-triphosphate = cyclic pyranopterin phosphate + diphosphate. It participates in cofactor biosynthesis; molybdopterin biosynthesis. Its function is as follows. Catalyzes the conversion of (8S)-3',8-cyclo-7,8-dihydroguanosine 5'-triphosphate to cyclic pyranopterin monophosphate (cPMP). In Listeria monocytogenes serotype 4a (strain HCC23), this protein is Cyclic pyranopterin monophosphate synthase.